The sequence spans 548 residues: Calcium-transporting ATPase (548 aa).

An N-terminal signal peptide occupies residues 1 to 21 (MNFKSTVITAMCCFFSFAVLA). The a divalent metal cation site is built by Asp37 and Thr78. Thr78 (phosphothreonine intermediate) is an active-site residue. Substrate-binding positions include Asn99 and 160-162 (KDR). The ATP-binding signature appears at 179–187 (DGKTGDWIT). A divalent metal cation contacts are provided by Asp305, His309, Asp352, His353, and His488.

Requires Mg(2+) as cofactor.

The protein localises to the cell inner membrane. It carries out the reaction Ca(2+)(in) + ATP + H2O = Ca(2+)(out) + ADP + phosphate + H(+). Completely inhibited by vanadate(3-). Also inhibited by lanthanoid atom and phosphate. Not inhibited by N-ethylmaleimide, 1,3-dicyclohexylcarbodiimide, oligomycin, ouabain, valinomycin, nigericin, thapsigargin, cyclopiazonic acid or fluorescein isothiocyanate. Its function is as follows. Catalyzes the hydrolysis of ATP coupled with the transport of calcium. Has some hydrolysis activity also with dATP, GTP, UTP, ITP and 4-nitrophenyl phosphate as substrate. No activity with ADP, CTP, acetyl dihydrogen phosphate or AMP-PNP as substrate. The chain is Calcium-transporting ATPase from Myroides odoratus (Flavobacterium odoratum).